Consider the following 936-residue polypeptide: Protein translocase subunit SecA (936 aa).

Residues Gln-87, 105–109, and Asp-515 contribute to the ATP site; that span reads GEGKT. Zn(2+) contacts are provided by Cys-920, Cys-922, Cys-931, and His-932.

The protein belongs to the SecA family. In terms of assembly, monomer and homodimer. Part of the essential Sec protein translocation apparatus which comprises SecA, SecYEG and auxiliary proteins SecDF-YajC and YidC. It depends on Zn(2+) as a cofactor.

The protein resides in the cell inner membrane. It localises to the cytoplasm. The catalysed reaction is ATP + H2O + cellular proteinSide 1 = ADP + phosphate + cellular proteinSide 2.. Its function is as follows. Part of the Sec protein translocase complex. Interacts with the SecYEG preprotein conducting channel. Has a central role in coupling the hydrolysis of ATP to the transfer of proteins into and across the cell membrane, serving both as a receptor for the preprotein-SecB complex and as an ATP-driven molecular motor driving the stepwise translocation of polypeptide chains across the membrane. The polypeptide is Protein translocase subunit SecA (Paraburkholderia xenovorans (strain LB400)).